The chain runs to 308 residues: Probable very-long-chain enoyl-CoA reductase art-1 (308 aa).

One can recognise a Ubiquitin-like domain in the interval 7-85; the sequence is VYDAKRTDNL…VLYVRDLGPQ (79 aa). 4 helical membrane-spanning segments follow: residues 112 to 132, 169 to 189, 194 to 214, and 255 to 275; these read FIYG…IAFF, WGFA…PPAF, VYFG…IHIL, and WIFF…TAGF.

The protein belongs to the steroid 5-alpha reductase family.

The protein resides in the endoplasmic reticulum membrane. The catalysed reaction is a very-long-chain 2,3-saturated fatty acyl-CoA + NADP(+) = a very-long-chain (2E)-enoyl-CoA + NADPH + H(+). Its pathway is lipid metabolism; fatty acid biosynthesis. Its function is as follows. Catalyzes the last of the four reactions of the long-chain fatty acids elongation cycle. This endoplasmic reticulum-bound enzymatic process, allows the addition of 2 carbons to the chain of long- and very long-chain fatty acids/VLCFAs per cycle. This enzyme reduces the trans-2,3-enoyl-CoA fatty acid intermediate to an acyl-CoA that can be further elongated by entering a new cycle of elongation. Thereby, it participates in the production of VLCFAs of different chain lengths that are involved in multiple biological processes as precursors of membrane lipids and lipid mediators. This is Probable very-long-chain enoyl-CoA reductase art-1 (art-1) from Caenorhabditis elegans.